The sequence spans 372 residues: Alanine racemase (372 aa).

The Proton acceptor; specific for D-alanine role is filled by lysine 48. N6-(pyridoxal phosphate)lysine is present on lysine 48. Arginine 143 is a substrate binding site. Residue tyrosine 268 is the Proton acceptor; specific for L-alanine of the active site. Methionine 316 provides a ligand contact to substrate.

The protein belongs to the alanine racemase family. Pyridoxal 5'-phosphate is required as a cofactor.

It catalyses the reaction L-alanine = D-alanine. Its pathway is amino-acid biosynthesis; D-alanine biosynthesis; D-alanine from L-alanine: step 1/1. Its function is as follows. Catalyzes the interconversion of L-alanine and D-alanine. May also act on other amino acids. This Vibrio vulnificus (strain YJ016) protein is Alanine racemase (alr).